A 283-amino-acid polypeptide reads, in one-letter code: Elongation factor Ts (283 aa).

The segment at 80 to 83 (TDFV) is involved in Mg(2+) ion dislocation from EF-Tu.

It belongs to the EF-Ts family.

It localises to the cytoplasm. In terms of biological role, associates with the EF-Tu.GDP complex and induces the exchange of GDP to GTP. It remains bound to the aminoacyl-tRNA.EF-Tu.GTP complex up to the GTP hydrolysis stage on the ribosome. The sequence is that of Elongation factor Ts from Haemophilus influenzae (strain PittEE).